Reading from the N-terminus, the 305-residue chain is Ribonuclease BN (305 aa).

Zn(2+) is bound by residues His64, His66, Asp68, His69, His141, Asp212, and His270. Asp68 functions as the Proton acceptor in the catalytic mechanism.

This sequence belongs to the RNase Z family. RNase BN subfamily. Homodimer. It depends on Zn(2+) as a cofactor.

Functionally, zinc phosphodiesterase, which has both exoribonuclease and endoribonuclease activities. The sequence is that of Ribonuclease BN from Salmonella agona (strain SL483).